Consider the following 277-residue polypeptide: Large ribosomal subunit protein mL46 (277 aa).

Lys217 carries the post-translational modification N6-succinyllysine. Lys228 carries the N6-acetyllysine modification. Position 246 is an N6-succinyllysine (Lys246).

Belongs to the mitochondrion-specific ribosomal protein mL46 family. As to quaternary structure, component of the mitochondrial ribosome large subunit (39S) which comprises a 16S rRNA and about 50 distinct proteins.

It localises to the mitochondrion. This chain is Large ribosomal subunit protein mL46 (Mrpl46), found in Rattus norvegicus (Rat).